Reading from the N-terminus, the 688-residue chain is Glycine--tRNA ligase beta subunit (688 aa).

The protein belongs to the class-II aminoacyl-tRNA synthetase family. Tetramer of two alpha and two beta subunits.

The protein localises to the cytoplasm. The catalysed reaction is tRNA(Gly) + glycine + ATP = glycyl-tRNA(Gly) + AMP + diphosphate. The chain is Glycine--tRNA ligase beta subunit from Listeria monocytogenes serovar 1/2a (strain ATCC BAA-679 / EGD-e).